Consider the following 442-residue polypeptide: Pyruvate dehydrogenase complex protein X component, mitochondrial (442 aa).

The transit peptide at 1–35 directs the protein to the mitochondrion; it reads MASLAAACRVSARLAARKLQHDAAVRGFRSSAAAL. One can recognise a Lipoyl-binding domain in the interval 37 to 113; that stretch reads AQNFMMPALS…QVGTRIAVVA (77 aa). An N6-lipoyllysine modification is found at Lys78. Residues 119–169 form a disordered region; it reads ITKLEIPPDEGPQQLKAAAPAPAPTPAPAPASPQPQFAAPTPSPPKASTKV. Residues 139–151 are compositionally biased toward pro residues; it reads APAPTPAPAPASP. The segment covering 152 to 169 has biased composition (low complexity); that stretch reads QPQFAAPTPSPPKASTKV. Residues 175–215 form the Peripheral subunit-binding (PSBD) domain; sequence PLLPSVHQLIKENGLDESAVSNITPTGPGGRILKGDVLAYL. A disordered region spans residues 244–269; it reads AKPVEPEKPQEEKASAPAPAPRAPEP. The segment covering 245-257 has biased composition (basic and acidic residues); it reads KPVEPEKPQEEKA. An interaction to the E2 core region spans residues 317–336; it reads PLPTNYQPTADELFDQVLGL.

This sequence belongs to the 2-oxoacid dehydrogenase family. As to quaternary structure, eukaryotic pyruvate dehydrogenase (PDH) complexes are organized as a core consisting of the oligomeric dihydrolipoamide acetyl-transferase (E2), around which are arranged multiple copies of pyruvate dehydrogenase (E1), dihydrolipoamide dehydrogenase (E3) and protein X (E3BP) bound by non-covalent bonds. The Chaetomium thermophilum PDH complex contains 60 E2 units, 12 E3BP units, about 20 E1 units, and 12 or more E3 units. The units are organized in 1 E2 60-mer, 4 E3BP trimers, about 20 E1 tetramers, and a maximum of 12 E3 dimers. The E3BP trimers are bound inside the icosahedral core with tetrahedral symmetry.

It localises to the mitochondrion. The 10-megadalton pyruvate dehydrogenase complex contains multiple copies of three enzymatic components: pyruvate dehydrogenase (E1), dihydrolipoamide acetyltransferase (E2) and lipoamide dehydrogenase (E3) and catalyzes the overall oxidative decarboxylation of pyruvate to form acetyl-CoA and CO(2). E3BP is responsible for tethering E3 in proximity to the core, forming the entire metabolon, and the number of E3s is limited by the number of E3BPs. Within the complex, pyruvate and thiamine pyrophosphate (TPP or vitamin B1) are bound by pyruvate dehydrogenase E1 subunits alpha and beta and pyruvate is decarboxylated leading to the 2-carbon hydrohyethyl bound to TPP. The E2 component contains covalently-bound lipoyl cofactors and transfers the hydroxyethyl group from TPP to an oxidized form of covalently bound lipoamide, and the resulting acetyl group is then transferred to free coenzyme A to form acetyl-CoA and reduced dihydrolipoamide-E2. Finally, the flavoprotein dihydrolipoamide dehydrogenase (E3) re-oxidizes the lipoyl group of dihydrolipoamide-E2 to form lipoamide-E2 and NADH. A fourth subunit, E3BP, is responsible for tethering E3 in proximity to the core, forming the entire metabolon. The chain is Pyruvate dehydrogenase complex protein X component, mitochondrial from Chaetomium thermophilum (strain DSM 1495 / CBS 144.50 / IMI 039719) (Thermochaetoides thermophila).